A 525-amino-acid chain; its full sequence is Chromosomal replication initiator protein DnaA (525 aa).

The segment at 1 to 71 is domain I, interacts with DnaA modulators; the sequence is MNDFWQHCSA…SDLAREFWNT (71 aa). Residues 71–188 are domain II; it reads TPIEVQFVLD…GEADSMYERS (118 aa). Residues 162 to 182 form a disordered region; that stretch reads AGRRTWRPGPGAAPANGGEAD. The segment covering 169–181 has biased composition (low complexity); sequence PGPGAAPANGGEA. The segment at 189 to 405 is domain III, AAA+ region; it reads KLNPVLTFDN…GALRKILAYS (217 aa). ATP is bound by residues glycine 233, glycine 235, lysine 236, and threonine 237. The segment at 406–525 is domain IV, binds dsDNA; that stretch reads KFHGREISIE…LHVLEQTLKG (120 aa).

It belongs to the DnaA family. Oligomerizes as a right-handed, spiral filament on DNA at oriC.

It is found in the cytoplasm. Its function is as follows. Plays an essential role in the initiation and regulation of chromosomal replication. ATP-DnaA binds to the origin of replication (oriC) to initiate formation of the DNA replication initiation complex once per cell cycle. Binds the DnaA box (a 9 base pair repeat at the origin) and separates the double-stranded (ds)DNA. Forms a right-handed helical filament on oriC DNA; dsDNA binds to the exterior of the filament while single-stranded (ss)DNA is stabiized in the filament's interior. The ATP-DnaA-oriC complex binds and stabilizes one strand of the AT-rich DNA unwinding element (DUE), permitting loading of DNA polymerase. After initiation quickly degrades to an ADP-DnaA complex that is not apt for DNA replication. Binds acidic phospholipids. In Burkholderia cenocepacia (strain HI2424), this protein is Chromosomal replication initiator protein DnaA.